Reading from the N-terminus, the 248-residue chain is 1-(5-phosphoribosyl)-5-[(5-phosphoribosylamino)methylideneamino] imidazole-4-carboxamide isomerase (248 aa).

The active-site Proton acceptor is Asp8. Asp131 serves as the catalytic Proton donor.

This sequence belongs to the HisA/HisF family.

The protein resides in the cytoplasm. The catalysed reaction is 1-(5-phospho-beta-D-ribosyl)-5-[(5-phospho-beta-D-ribosylamino)methylideneamino]imidazole-4-carboxamide = 5-[(5-phospho-1-deoxy-D-ribulos-1-ylimino)methylamino]-1-(5-phospho-beta-D-ribosyl)imidazole-4-carboxamide. It functions in the pathway amino-acid biosynthesis; L-histidine biosynthesis; L-histidine from 5-phospho-alpha-D-ribose 1-diphosphate: step 4/9. This is 1-(5-phosphoribosyl)-5-[(5-phosphoribosylamino)methylideneamino] imidazole-4-carboxamide isomerase from Cupriavidus taiwanensis (strain DSM 17343 / BCRC 17206 / CCUG 44338 / CIP 107171 / LMG 19424 / R1) (Ralstonia taiwanensis (strain LMG 19424)).